Here is a 409-residue protein sequence, read N- to C-terminus: D-galactonate dehydratase family member Achl_0790 (409 aa).

Asp-217 contributes to the Mg(2+) binding site. D-arabinonate is bound at residue His-219. Mg(2+) contacts are provided by Glu-243 and Glu-269. Residues Glu-269, Arg-290, His-319, and Glu-346 each contribute to the D-arabinonate site.

It belongs to the mandelate racemase/muconate lactonizing enzyme family. GalD subfamily.

Its function is as follows. Has no detectable activity with D-mannonate and with a panel of 70 other acid sugars (in vitro), in spite of the conservation of the residues that are expected to be important for catalytic activity and cofactor binding. May have evolved a divergent function. This chain is D-galactonate dehydratase family member Achl_0790, found in Pseudarthrobacter chlorophenolicus (strain ATCC 700700 / DSM 12829 / CIP 107037 / JCM 12360 / KCTC 9906 / NCIMB 13794 / A6) (Arthrobacter chlorophenolicus).